The sequence spans 183 residues: Small ribosomal subunit protein bS16 (183 aa).

A compositionally biased stretch (basic and acidic residues) spans 149 to 161; that stretch reads EKKAAEAAAKAEA. The tract at residues 149–183 is disordered; the sequence is EKKAAEAAAKAEAEAANAPAEEAPAAEATEAPAEA. The span at 162 to 183 shows a compositional bias: low complexity; the sequence is EAANAPAEEAPAAEATEAPAEA.

The protein belongs to the bacterial ribosomal protein bS16 family.

The sequence is that of Small ribosomal subunit protein bS16 from Phocaeicola vulgatus (strain ATCC 8482 / DSM 1447 / JCM 5826 / CCUG 4940 / NBRC 14291 / NCTC 11154) (Bacteroides vulgatus).